A 205-amino-acid chain; its full sequence is 3-demethoxyubiquinol 3-hydroxylase (205 aa).

Residues E54, E84, H87, E136, E168, and H171 each contribute to the Fe cation site.

The protein belongs to the COQ7 family. Requires Fe cation as cofactor.

It localises to the cell membrane. It catalyses the reaction a 5-methoxy-2-methyl-3-(all-trans-polyprenyl)benzene-1,4-diol + AH2 + O2 = a 3-demethylubiquinol + A + H2O. The protein operates within cofactor biosynthesis; ubiquinone biosynthesis. Functionally, catalyzes the hydroxylation of 2-nonaprenyl-3-methyl-6-methoxy-1,4-benzoquinol during ubiquinone biosynthesis. The protein is 3-demethoxyubiquinol 3-hydroxylase of Acidovorax sp. (strain JS42).